The primary structure comprises 1020 residues: Sodium/potassium-transporting ATPase subunit alpha-2 (1020 aa).

The propeptide occupies 1–5 (MGRGA). The disordered stretch occupies residues 1–31 (MGRGAGREYSPAATTAENGGGKKKQKEKELD). The Cytoplasmic portion of the chain corresponds to 6 to 85 (GREYSPAATT…NALTPPPTTP (80 aa)). At serine 10 the chain carries Phosphoserine. The interval 80–82 (PPP) is interaction with phosphoinositide-3 kinase. A helical transmembrane segment spans residues 86-106 (EWVKFCRQLFGGFSILLWIGA). Residues 107–129 (ILCFLAFGIQAAMEDEPSNDNLY) are Extracellular-facing. The helical transmembrane segment at 130 to 150 (LGVVLAAVVIVTGCFSYYQEA) threads the bilayer. The Cytoplasmic portion of the chain corresponds to 151–286 (KSSKIMDSFK…VGRTPIAMEI (136 aa)). A compositionally biased stretch (polar residues) spans 212-227 (DNSSLTGESEPQTRSP). Positions 212–231 (DNSSLTGESEPQTRSPEFTH) are disordered. The chain crosses the membrane as a helical span at residues 287–306 (EHFIQLITGVAVFLGVSFFV). At 307 to 318 (LSLILGYSWLEA) the chain is on the extracellular side. Residues 319–336 (VIFLIGIIVANVPEGLLA) form a helical membrane-spanning segment. At 337 to 769 (TVTVCLTLTA…EEGRLIFDNL (433 aa)) the chain is on the cytoplasmic side. The active-site 4-aspartylphosphate intermediate is the aspartate 374. Phosphoserine occurs at positions 439, 450, 496, and 559. Threonine 570 carries the phosphothreonine modification. Phosphoserine occurs at positions 587 and 672. The Mg(2+) site is built by aspartate 714 and aspartate 718. A helical membrane pass occupies residues 770-789 (KKSIAYTLTSNIPEITPFLL). The Extracellular segment spans residues 790 to 799 (FIIANIPLPL). Residues 800–820 (GTVTILCIDLGTDMVPAISLA) traverse the membrane as a helical segment. The Cytoplasmic segment spans residues 821–840 (YEAAESDIMKRQPRNPQTDK). A Phosphoserine modification is found at serine 826. The helical transmembrane segment at 841–863 (LVNERLISMAYGQIGMIQALGGF) threads the bilayer. Over 864-915 (FTYFVILAENGFLPSRLLGIRLDWDDRSMNDLEDSYGQEWTYEQRKVVEFTC) the chain is Extracellular. A helical transmembrane segment spans residues 916–935 (HTAFFASIVVVQWADLIICK). Over 936–948 (TRRNSVFQQGMKN) the chain is Cytoplasmic. Serine 940 is modified (phosphoserine; by PKA). A helical transmembrane segment spans residues 949 to 967 (KILIFGLLEETALAAFLSY). Residues 968–982 (CPGMGVALRMYPLKV) are Extracellular-facing. Residues 983 to 1003 (TWWFCAFPYSLLIFIYDEVRK) form a helical membrane-spanning segment. Residues 1004–1020 (LILRRYPGGWVEKETYY) lie on the Cytoplasmic side of the membrane.

This sequence belongs to the cation transport ATPase (P-type) (TC 3.A.3) family. Type IIC subfamily. In terms of assembly, the sodium/potassium-transporting ATPase is composed of a catalytic alpha subunit, an auxiliary non-catalytic beta subunit and an additional regulatory subunit. Interacts with regulatory subunit FXYD1.

Its subcellular location is the membrane. The protein localises to the cell membrane. It carries out the reaction K(+)(out) + Na(+)(in) + ATP + H2O = K(+)(in) + Na(+)(out) + ADP + phosphate + H(+). Its function is as follows. This is the catalytic component of the active enzyme, which catalyzes the hydrolysis of ATP coupled with the exchange of sodium and potassium ions across the plasma membrane. This action creates the electrochemical gradient of sodium and potassium, providing the energy for active transport of various nutrients. The sequence is that of Sodium/potassium-transporting ATPase subunit alpha-2 (ATP1A2) from Bos taurus (Bovine).